Consider the following 399-residue polypeptide: Flavohemoprotein (399 aa).

A Globin domain is found at 1 to 138 (MLAEKTRSII…IADIFITVEK (138 aa)). Thr22 is subject to Phosphothreonine. A heme b-binding site is contributed by His85. Catalysis depends on charge relay system residues Tyr95 and Glu137. The interval 146-399 (WPGWKPFDIT…FGPKMSTVQV (254 aa)) is reductase. The 118-residue stretch at 147–264 (PGWKPFDITA…SAPAGDFAIN (118 aa)) folds into the FAD-binding FR-type domain. Residues Tyr189 and 207 to 210 (RHYS) contribute to the FAD site. 281-286 (GVGVTP) lines the NADP(+) pocket. 389 to 392 (PFGP) is a binding site for FAD.

This sequence belongs to the globin family. Two-domain flavohemoproteins subfamily. It in the C-terminal section; belongs to the flavoprotein pyridine nucleotide cytochrome reductase family. FAD serves as cofactor. It depends on heme b as a cofactor.

It localises to the cytoplasm. It catalyses the reaction 2 nitric oxide + NADPH + 2 O2 = 2 nitrate + NADP(+) + H(+). The enzyme catalyses 2 nitric oxide + NADH + 2 O2 = 2 nitrate + NAD(+) + H(+). Functionally, is involved in NO detoxification in an aerobic process, termed nitric oxide dioxygenase (NOD) reaction that utilizes O(2) and NAD(P)H to convert NO to nitrate, which protects the fungus from various noxious nitrogen compounds. Therefore, plays a central role in the inducible response to nitrosative stress. In the presence of oxygen and NADH, it has NADH oxidase activity, which leads to the generation of superoxide and H(2)O(2). Under anaerobic conditions, it also exhibits nitric oxide reductase and FAD reductase activities. However, all these reactions are much lower than NOD activity. This Saccharomyces cerevisiae (strain ATCC 204508 / S288c) (Baker's yeast) protein is Flavohemoprotein (YHB1).